The sequence spans 434 residues: D-amino acid dehydrogenase (434 aa).

3 to 17 (VIILGGGVIGVTSAW) provides a ligand contact to FAD.

Belongs to the DadA oxidoreductase family. It depends on FAD as a cofactor.

The enzyme catalyses a D-alpha-amino acid + A + H2O = a 2-oxocarboxylate + AH2 + NH4(+). It functions in the pathway amino-acid degradation; D-alanine degradation; NH(3) and pyruvate from D-alanine: step 1/1. Its function is as follows. Oxidative deamination of D-amino acids. The sequence is that of D-amino acid dehydrogenase from Proteus mirabilis (strain HI4320).